The following is a 234-amino-acid chain: MSIISMKQLLESGVHFGHQTRRWNPKMASYIFTERNGIYIIDLQKTVRKIEEAYEFVKKIASEGKDILFIGTKKQAQEAIKEEAKRSNMHYVNNRWLGGMLTNFLTIRNRIGKLEELEKMEEDGTFEVLSKKEVIKLRNEKQKLERNLGGIKAMNAENVGALFVVDPRKEKNAISEAKILGIPVVAIVDTNCDPDEVDYVIPGNDDAIRAVKLITSKVADAVIEGRQGEQLAEE.

It belongs to the universal ribosomal protein uS2 family.

The protein is Small ribosomal subunit protein uS2 of Clostridium kluyveri (strain NBRC 12016).